The chain runs to 409 residues: ATPase ASNA1 homolog (409 aa).

21 to 28 (KGGVGKTT) serves as a coordination point for ATP. Residue D62 is part of the active site. 2 residues coordinate ATP: E303 and N330. Residues C342 and C345 each coordinate Zn(2+).

This sequence belongs to the arsA ATPase family. Homodimer.

It localises to the cytoplasm. The protein localises to the endoplasmic reticulum. ATPase required for the post-translational delivery of tail-anchored (TA) proteins to the endoplasmic reticulum. Recognizes and selectively binds the transmembrane domain of TA proteins in the cytosol. This complex then targets to the endoplasmic reticulum by membrane-bound receptors, where the tail-anchored protein is released for insertion. This process is regulated by ATP binding and hydrolysis. ATP binding drives the homodimer towards the closed dimer state, facilitating recognition of newly synthesized TA membrane proteins. ATP hydrolysis is required for insertion. Subsequently, the homodimer reverts towards the open dimer state, lowering its affinity for the membrane-bound receptor, and returning it to the cytosol to initiate a new round of targeting. In Leishmania infantum, this protein is ATPase ASNA1 homolog.